The primary structure comprises 259 residues: Truncated Ankyrin repeat protein OPG003 (259 aa).

This sequence belongs to the orthopoxvirus OPG003 family.

The sequence is that of Truncated Ankyrin repeat protein OPG003 (OPG003) from Vaccinia virus (strain Copenhagen) (VACV).